The chain runs to 515 residues: GMP synthase [glutamine-hydrolyzing] (515 aa).

A Glutamine amidotransferase type-1 domain is found at 10–200 (TIIVLDFGSQ…VFGVCGCSEG (191 aa)). C87 (nucleophile) is an active-site residue. Residues H174 and E176 contribute to the active site. One can recognise a GMPS ATP-PPase domain in the interval 201–390 (WNMENFIEVE…LGIPDEIVWR (190 aa)). ATP is bound at residue 228–234 (SGGVDSS).

As to quaternary structure, homodimer.

It catalyses the reaction XMP + L-glutamine + ATP + H2O = GMP + L-glutamate + AMP + diphosphate + 2 H(+). It participates in purine metabolism; GMP biosynthesis; GMP from XMP (L-Gln route): step 1/1. Its function is as follows. Catalyzes the synthesis of GMP from XMP. The sequence is that of GMP synthase [glutamine-hydrolyzing] from Bacillus anthracis (strain A0248).